Reading from the N-terminus, the 892-residue chain is Alpha-actinin-1 (892 aa).

Met-1 carries the post-translational modification N-acetylmethionine. Residues 1–247 (MDHYDSQQTN…IMTYVSSFYH (247 aa)) are actin-binding. Ser-6 is subject to Phosphoserine. Tyr-12 carries the post-translational modification Phosphotyrosine; by FAK1. Calponin-homology (CH) domains are found at residues 31-135 (KQQR…LRFA) and 144-250 (TSAK…HAFS). N6-acetyllysine occurs at positions 95 and 195. 4 Spectrin repeats span residues 274–384 (QLME…WLLN), 394–499 (HLAE…ALER), 509–620 (QLYL…ALTE), and 630–733 (RLRK…EVEN). An interaction with DDN region spans residues 274–733 (QLMEDYEKLA…IARTINEVEN (460 aa)). Ser-471 is subject to Phosphoserine. Residue Lys-676 is modified to N6-acetyllysine. Ser-677 bears the Phosphoserine mark. EF-hand domains follow at residues 746–781 (EQMNEFRASFNHFDRDHSGTLGPEEFKACLISLGYD) and 787–822 (QGEAEFARIMSIVDPNRLGVVTFQAFIDFMSRETAD). Ca(2+) is bound by residues Asp-759, Asp-761, Ser-763, Thr-765, and Glu-770. A Phosphoserine modification is found at Ser-890.

This sequence belongs to the alpha-actinin family. Homodimer; antiparallel. Interacts with MYOZ2, TTID and LPP. Interacts with DDN. Interacts with PSD. Interacts with MICALL2. Interacts with DNM2 and CTTN. Interacts with PDLIM1. Interacts with PDLIM2. Interacts with PDLIM4 (via PDZ domain). Interacts with IGSF8.

The protein resides in the cytoplasm. Its subcellular location is the cytoskeleton. The protein localises to the myofibril. It localises to the sarcomere. It is found in the z line. The protein resides in the cell membrane. Its subcellular location is the cell junction. The protein localises to the cell projection. It localises to the ruffle. In terms of biological role, F-actin cross-linking protein which is thought to anchor actin to a variety of intracellular structures. Association with IGSF8 regulates the immune synapse formation and is required for efficient T-cell activation. This Rattus norvegicus (Rat) protein is Alpha-actinin-1 (Actn1).